Reading from the N-terminus, the 156-residue chain is Cell division protein SepF (156 aa).

Basic and acidic residues predominate over residues 23-36; that stretch reads SYEKEQTDMKKQQD. The disordered stretch occupies residues 23–50; sequence SYEKEQTDMKKQQDPPEQQDVTFPKAQP.

The protein belongs to the SepF family. As to quaternary structure, homodimer. Interacts with FtsZ.

It is found in the cytoplasm. Functionally, cell division protein that is part of the divisome complex and is recruited early to the Z-ring. Probably stimulates Z-ring formation, perhaps through the cross-linking of FtsZ protofilaments. Its function overlaps with FtsA. This Bacillus thuringiensis (strain Al Hakam) protein is Cell division protein SepF.